Here is a 654-residue protein sequence, read N- to C-terminus: NADH-ubiquinone oxidoreductase chain 5 (654 aa).

The next 16 helical transmembrane spans lie at 1 to 21 (MYLA…FLGR), 30 to 50 (LITC…FYEV), 76 to 96 (FIYD…SALV), 113 to 133 (FFAY…GDNY), 135 to 155 (VMFI…NFWF), 178 to 198 (FSIG…TTVF), 200 to 220 (LAPF…LVAA), 241 to 261 (TPVS…YLLL), 274 to 294 (LILI…TGLL), 301 to 320 (VIAY…CGLS), 324 to 346 (VALF…AGSV), 365 to 385 (LLPF…ALPF), 406 to 426 (SGNL…MYSI), 451 to 471 (PLIM…FGYV), 510 to 530 (FLPL…YWIF), and 612 to 632 (TYAM…FFIG).

This sequence belongs to the complex I subunit 5 family.

Its subcellular location is the mitochondrion inner membrane. The enzyme catalyses a ubiquinone + NADH + 5 H(+)(in) = a ubiquinol + NAD(+) + 4 H(+)(out). Its function is as follows. Core subunit of the mitochondrial membrane respiratory chain NADH dehydrogenase (Complex I) that is believed to belong to the minimal assembly required for catalysis. Complex I functions in the transfer of electrons from NADH to the respiratory chain. The immediate electron acceptor for the enzyme is believed to be ubiquinone. This is NADH-ubiquinone oxidoreductase chain 5 (ND5) from Rhizopus stolonifer (Rhizopus nigricans).